A 611-amino-acid chain; its full sequence is Glutamine--fructose-6-phosphate aminotransferase [isomerizing] (611 aa).

Catalysis depends on cysteine 2, which acts as the Nucleophile; for GATase activity. In terms of domain architecture, Glutamine amidotransferase type-2 spans 2-219 (CGIVGAVAER…EGDIAEIRRD (218 aa)). SIS domains follow at residues 287 to 427 (AADL…VRGT) and 460 to 601 (IAEL…VDQP). Catalysis depends on lysine 606, which acts as the For Fru-6P isomerization activity.

In terms of assembly, homodimer.

The protein localises to the cytoplasm. The enzyme catalyses D-fructose 6-phosphate + L-glutamine = D-glucosamine 6-phosphate + L-glutamate. Functionally, catalyzes the first step in hexosamine metabolism, converting fructose-6P into glucosamine-6P using glutamine as a nitrogen source. This chain is Glutamine--fructose-6-phosphate aminotransferase [isomerizing], found in Pseudomonas putida (strain ATCC 47054 / DSM 6125 / CFBP 8728 / NCIMB 11950 / KT2440).